Reading from the N-terminus, the 136-residue chain is Large-conductance mechanosensitive channel (136 aa).

Transmembrane regions (helical) follow at residues 9 to 29 (AFAS…GAAF) and 79 to 99 (IQTI…VKAI).

Belongs to the MscL family. In terms of assembly, homopentamer.

Its subcellular location is the cell inner membrane. Functionally, channel that opens in response to stretch forces in the membrane lipid bilayer. May participate in the regulation of osmotic pressure changes within the cell. This is Large-conductance mechanosensitive channel from Shewanella baltica (strain OS223).